The following is a 353-amino-acid chain: Alcohol dehydrogenase 1 (353 aa).

Residues C47, H70, C101, C104, C107, C115, and C157 each contribute to the Zn(2+) site. Residues 181-187, D205, K210, 274-276, and R346 contribute to the NAD(+) site; these read GAGGGLG and IGL.

The protein belongs to the zinc-containing alcohol dehydrogenase family. In terms of assembly, homotetramer. Zn(2+) serves as cofactor.

It is found in the cytoplasm. It catalyses the reaction a primary alcohol + NAD(+) = an aldehyde + NADH + H(+). It carries out the reaction a secondary alcohol + NAD(+) = a ketone + NADH + H(+). The polypeptide is Alcohol dehydrogenase 1 (adh-1) (Neurospora crassa (strain ATCC 24698 / 74-OR23-1A / CBS 708.71 / DSM 1257 / FGSC 987)).